Reading from the N-terminus, the 845-residue chain is MIMDALRHYGLSQQRTELTSAIQLPLRNTRRIKFTCFDVSEKYIIFGANSGSLYVYDRESVNFLSIIPSQLGTISQVQISSNGKQIAVANMRGAIGVVLDLDGSASKEVLLTELGGGEAAGGVGVVGRSGTTAFVTSFCWGEDDKELYCGDSKGTVSLLQLSMFMGRNILNMTLSPVLLLENHIVQIDRYKELLLVSTLSKCVLCNTQREEFKQIGNRPRDGLYGATFIVPNPEYFNTPTEEDLEDAKSMEGSDDNDNDQRSSPSGVKIAQDQVRIFCSRPGSRLWEADIDGNVLRTHQFRHRSTDREANGPCNEIIAFKLLQKVLGRLILVHDDREIFLIDPIASQVVLWINNVGDISRVRLVGEDIYVFGNDQTMMKLRLDVEQKEVPKRLPKKINGKKSSPFKENGVYILDHLFNNNGLKEGTLQTESTIKEALASVVRGKYGRNIKQMFLGYDQMGPERPKTLNISKVYNSEESYNNMVQVLPTDESSYAEDDCSEDVVPKRNPPKKMFSMSLLSDYQLSEDDKTVRNLYLVYRSSIISNLNFADRYAKIFDAYDTESIVSLLHKLEIVMDENNEEQSRLKCIKIYFDYLKVELIWEIDVESRAFIKQCFIEYNKMLLHEELCELEKCESCGHYLRTNINCHYPEIGTTLIQYYWSRKDYAHCFELVQQIPFLWHTITKFYIQDNREDKAIQCIWNVGDPGLLERAACEMFTMDHWRQLLDLMLTCYNSNSLMCLNCDKLCTLADPGRNPMWREQQNQAQSPVVNPKDNNHINNNNIGITTRGSTNVNRFYSWNYILNTAIDQKCVDGKSMLKLLRGYDEYIPKGAISTSFYLKCLLNVSD.

The disordered stretch occupies residues Pro-239–Lys-268.

It belongs to the HPS5 family.

Its function is as follows. Has a role in the biogenesis of eye pigment granules. Eye pigment granules are specialized forms of late endosomes or lysosomes. Biogenesis of pigment granules in the eye requires molecular components required for protein delivery to lysosomes. This is BLOC-2 complex member HPS5 homolog from Aedes aegypti (Yellowfever mosquito).